The following is a 95-amino-acid chain: Protein translocase subunit SecE (95 aa).

The interval 1–35 (MTDAVGSIDMPDAEDEAPESKKKSRKGGKRGKKGP) is disordered. Over residues 22-35 (KKSRKGGKRGKKGP) the composition is skewed to basic residues. A helical transmembrane segment spans residues 67–87 (VVIVFVVVMIGLVTVLDIGFA).

The protein belongs to the SecE/SEC61-gamma family. As to quaternary structure, component of the Sec protein translocase complex. Heterotrimer consisting of SecY, SecE and SecG subunits. The heterotrimers can form oligomers, although 1 heterotrimer is thought to be able to translocate proteins. Interacts with the ribosome. Interacts with SecDF, and other proteins may be involved. Interacts with SecA.

It is found in the cell membrane. Its function is as follows. Essential subunit of the Sec protein translocation channel SecYEG. Clamps together the 2 halves of SecY. May contact the channel plug during translocation. The polypeptide is Protein translocase subunit SecE (Streptomyces griseus).